Here is a 304-residue protein sequence, read N- to C-terminus: MDLIILVGIAIALLVVIISLYLLQKKNSTTEAKPAAAAPQRGVPQRAQEGVPRRAQIARNQRNRLRQNAPVAAAAPQAEAPAGSDNDDDAQADGEGARLPQGAVLDEKMGAKKRAKMEAKEAKRVQREQELYDREQRKAKEAKEDAERKQQEEIEAEAERKKAEAERLAKEERERKEHEEYLKMKAAFSVEEEGFEEGDADEQDNLLADFIQYIKDNKVVVLEDLAVAFKLKTQQAIDRIQELQADGTITGVIDDRGKFIYVSEEELVAVAKFIKQRGRVSIADLAESSNNLINLTPVSAEGSS.

Topologically, residues 1–2 are lumenal; it reads MD. Residues 3 to 23 traverse the membrane as a helical segment; sequence LIILVGIAIALLVVIISLYLL. Over 24–304 the chain is Cytoplasmic; that stretch reads QKKNSTTEAK…LTPVSAEGSS (281 aa). The interval 31 to 174 is disordered; that stretch reads EAKPAAAAPQ…AERLAKEERE (144 aa). Residues 53–82 show a composition bias toward low complexity; that stretch reads RRAQIARNQRNRLRQNAPVAAAAPQAEAPA. Basic and acidic residues predominate over residues 105–174; the sequence is LDEKMGAKKR…AERLAKEERE (70 aa).

Belongs to the DDRGK1 family. In terms of assembly, interacts with Atg9; the interaction is transient.

Its subcellular location is the endoplasmic reticulum membrane. Functionally, substrate adapter for ufmylation, the covalent attachment of the ubiquitin-like modifier UFM1 to substrate proteins. Required for ufmylation of Atg9; protects the nervous system during aging, possibly by stabilizing Atg9 and supporting its function. This chain is DDRGK domain-containing protein 1, found in Drosophila ananassae (Fruit fly).